The following is a 107-amino-acid chain: Iron-sulfur cluster assembly protein CyaY (107 aa).

Belongs to the frataxin family.

Functionally, involved in iron-sulfur (Fe-S) cluster assembly. May act as a regulator of Fe-S biogenesis. This Neisseria gonorrhoeae (strain ATCC 700825 / FA 1090) protein is Iron-sulfur cluster assembly protein CyaY.